A 459-amino-acid polypeptide reads, in one-letter code: MFS-type transporter SLC18B1 (459 aa).

Met1 is modified (N-acetylmethionine). Positions 1-10 are enriched in low complexity; sequence MDEAGSPAPA. The disordered stretch occupies residues 1–27; that stretch reads MDEAGSPAPAGTGGGDDPGGSTRETSR. Residues 1 to 33 lie on the Cytoplasmic side of the membrane; the sequence is MDEAGSPAPAGTGGGDDPGGSTRETSRRLSREQ. Residue Ser21 is modified to Phosphoserine. The chain crosses the membrane as a helical span at residues 34–54; that stretch reads IFVLVSAASMNLGCMMTYSIL. At 55–70 the chain is on the extracellular side; sequence GPFFPKEAEKKGASNT. The chain crosses the membrane as a helical span at residues 71 to 91; it reads MIGMIFGCYALFELLASLVFG. Topologically, residues 92–100 are cytoplasmic; sequence KYLVHIGAK. Residues 101–121 traverse the membrane as a helical segment; the sequence is FMFIAGMFVSGGVTILFGVLD. The Extracellular portion of the chain corresponds to 122 to 127; the sequence is QLPEGP. A helical membrane pass occupies residues 128–148; sequence IFIAMCFLVRIVDAIGFGAAI. Topologically, residues 149-167 are cytoplasmic; sequence TASSSILAKAFPNNVATVM. Residues 168 to 188 form a helical membrane-spanning segment; sequence GSLEVFSGLGLVAGPPLGGLL. Topologically, residues 189–195 are extracellular; it reads YQSFGYE. The helical transmembrane segment at 196–216 threads the bilayer; it reads VPFIFLGCIVLLMIPLNLYIL. Over 217-235 the chain is Cytoplasmic; it reads PSYAQESDPGKQSFWKLVT. Residues 236–256 traverse the membrane as a helical segment; the sequence is LPKMGLLAFVIISLSSCFGFL. Residues 257-274 lie on the Extracellular side of the membrane; that stretch reads DPTLSLFVMEKFSLSTGY. Residues 275-295 traverse the membrane as a helical segment; that stretch reads VGLVFLGLSLSYAISSPLFGL. Residues 296 to 306 lie on the Cytoplasmic side of the membrane; that stretch reads LSDKMPTLRKW. Residues 307–327 traverse the membrane as a helical segment; sequence LLVFGNLITAGCYMLLGPVPL. The Extracellular segment spans residues 328-333; that stretch reads LHIKSQ. Residues 334-354 traverse the membrane as a helical segment; sequence LWLLVLVLVVNGISAGMSIIP. The Cytoplasmic portion of the chain corresponds to 355–379; the sequence is TFPEMLSCAYANGFEDSISTLGLVS. The chain crosses the membrane as a helical span at residues 380-400; that stretch reads GLFGAMWSVGAFMGPILGGFL. Residues 401-409 lie on the Extracellular side of the membrane; that stretch reads CEKIGFEWA. Residues 410–430 form a helical membrane-spanning segment; that stretch reads AAMQGLWTLLSGVSMALFYLW. The Cytoplasmic portion of the chain corresponds to 431-459; that stretch reads EDSTARRRSKAQNSLGTEEERAALLPNDT. Residues 440-459 are disordered; the sequence is KAQNSLGTEEERAALLPNDT.

This sequence belongs to the major facilitator superfamily. In terms of tissue distribution, widely expressed, with highest expression in the lung, pancreas and kidney. High expression in the CNS, particularly in the hypothalamus, the thalamus and the cerebellum. In the forebrain, abundantly expressed in the telencephalon, especially in the cerebral cortex layers, except layer 1, as well as in the induseum griseum, the piriform area, the taenia tecta, dorsal part and in the entorhinal area, lateral part. Lower levels in the bed anterior olfactory nucleus, posteroventral part and in layer two of the olfactory tubercle. In the amygdala, high levels observed in the intercalated nucleus and the medial nucleus. In the diencephalon, expressed in the nuclei in both the hypothalamus and thalamus. Among the hypothalamic areas, strongest expression in the arcuate nucleus and in the ventromedial nucleus, as well as in the suprachiasmatic nucleus, anterior nucleus, especially in its central part, and in the magnocellular division of the paraventricular nucleus. In the thalamus, highest levels in the medial habenula. Expression also observed in the paraventricular thalamic nucleus, parataenial nucleus, central medial nucleus, intermediodorsal nucleus and lateral dorsal nucleus. In the hindbrain, detected in the cerebellum and in the pons. In the midbrain and the medulla, expression levels were modest. In the midbrain, highest expression in the periaqueductal gray and all subdivisions of the interpeduncular nucleus, except for the caudal part. In the pons, the strongest labeling was seen in the nucleus incertus and in the tegmental nucleus. Expressed in bone marrow-derived mast cells (at protein level).

Its subcellular location is the cytoplasmic vesicle. The protein resides in the secretory vesicle membrane. It localises to the secretory vesicle. The protein localises to the synaptic vesicle membrane. It catalyses the reaction spermine(in) + n H(+)(out) = spermine(out) + n H(+)(in). It carries out the reaction spermidine(in) + n H(+)(out) = spermidine(out) + n H(+)(in). The enzyme catalyses serotonin(in) + n H(+)(out) = serotonin(out) + n H(+)(in). Its function is as follows. Proton-coupled polyamine antiporter involved in the translocation of polyamines from cytosol into secretory vesicles prior to their release via exocytosis. Uses the electrochemical proton gradient generated by a V-type proton-pumping ATPase to couple the efflux of protons with the uptake of a polyamine molecule. Facilitates vesicular storage of spermine and spermidine in astrocytes with an impact on glutamatergic neuronal transmission and memory formation. Upon antigen stimulation, regulates polyamine accumulation and release in mast cell secretory granules, which in turn potentiates mast cell degranulation and histamine secretion. The chain is MFS-type transporter SLC18B1 from Mus musculus (Mouse).